A 369-amino-acid polypeptide reads, in one-letter code: Phosphoserine aminotransferase (369 aa).

Arginine 42 provides a ligand contact to L-glutamate. Pyridoxal 5'-phosphate-binding residues include tryptophan 101, threonine 152, aspartate 176, and glutamine 199. Lysine 200 is subject to N6-(pyridoxal phosphate)lysine. 241-242 (NT) is a pyridoxal 5'-phosphate binding site.

Belongs to the class-V pyridoxal-phosphate-dependent aminotransferase family. SerC subfamily. In terms of assembly, homodimer. Pyridoxal 5'-phosphate serves as cofactor.

The protein resides in the cytoplasm. It carries out the reaction O-phospho-L-serine + 2-oxoglutarate = 3-phosphooxypyruvate + L-glutamate. The enzyme catalyses 4-(phosphooxy)-L-threonine + 2-oxoglutarate = (R)-3-hydroxy-2-oxo-4-phosphooxybutanoate + L-glutamate. It participates in amino-acid biosynthesis; L-serine biosynthesis; L-serine from 3-phospho-D-glycerate: step 2/3. It functions in the pathway cofactor biosynthesis; pyridoxine 5'-phosphate biosynthesis; pyridoxine 5'-phosphate from D-erythrose 4-phosphate: step 3/5. In terms of biological role, catalyzes the reversible conversion of 3-phosphohydroxypyruvate to phosphoserine and of 3-hydroxy-2-oxo-4-phosphonooxybutanoate to phosphohydroxythreonine. This is Phosphoserine aminotransferase from Delftia acidovorans (strain DSM 14801 / SPH-1).